Reading from the N-terminus, the 640-residue chain is Threonine--tRNA ligase (640 aa).

The region spanning 1-59 (MKIKVKLPDGKEKEYDRGITPAEIAKELGIKKAIGAVVNGELWDLKRPIENDCELRLVT) is the TGS domain. Residues 240-531 (DHRKLGPQLE…LIEHFAGAFP (292 aa)) are catalytic. The Zn(2+) site is built by Cys-332, His-383, and His-508.

The protein belongs to the class-II aminoacyl-tRNA synthetase family. As to quaternary structure, homodimer. Zn(2+) is required as a cofactor.

The protein localises to the cytoplasm. The enzyme catalyses tRNA(Thr) + L-threonine + ATP = L-threonyl-tRNA(Thr) + AMP + diphosphate + H(+). Its function is as follows. Catalyzes the attachment of threonine to tRNA(Thr) in a two-step reaction: L-threonine is first activated by ATP to form Thr-AMP and then transferred to the acceptor end of tRNA(Thr). Also edits incorrectly charged L-seryl-tRNA(Thr). The sequence is that of Threonine--tRNA ligase from Thermotoga maritima (strain ATCC 43589 / DSM 3109 / JCM 10099 / NBRC 100826 / MSB8).